A 551-amino-acid chain; its full sequence is Interleukin-2 receptor subunit beta (551 aa).

The N-terminal stretch at 1–26 is a signal peptide; the sequence is MAAPALSWRLPLLILLLPLATSWASA. Residues 27–240 are Extracellular-facing; sequence AVNGTSQFTC…TKPAALGKDT (214 aa). Asn29, Asn43, and Asn71 each carry an N-linked (GlcNAc...) asparagine glycan. Intrachain disulfides connect Cys36–Cys46, Cys59–Cys110, and Cys74–Cys86. One can recognise a Fibronectin type-III domain in the interval 134–234; the sequence is APISLQVVHV…QPLAFRTKPA (101 aa). N-linked (GlcNAc...) asparagine glycosylation is present at Asn149. The WSXWS motif signature appears at 220–224; that stretch reads WSPWS. A helical membrane pass occupies residues 241–265; sequence IPWLGHLLVGLSGAFGFIILVYLLI. Over 266-551 the chain is Cytoplasmic; the sequence is NCRNTGPWLK…LQGQDPTHLV (286 aa). The short motif at 278-286 is the Box 1 motif element; that stretch reads LKCNTPDPS. Disordered regions lie at residues 389 to 416 and 432 to 486; these read EEDPDEGVAGAPTGSSPQPLQPLSGEDD and PSLL…VDFQ.

It belongs to the type I cytokine receptor family. Type 4 subfamily. In terms of assembly, non-covalent dimer of an alpha and a beta subunit. IL2R exists in 3 different forms: a high affinity dimer, an intermediate affinity monomer (beta subunit), and a low affinity monomer (alpha subunit). The high and intermediate affinity forms also associate with a gamma subunit. Interacts with SHB upon interleukin stimulation. As to quaternary structure, (Microbial infection) Interacts with HTLV-1 accessory protein p12I.

It is found in the cell membrane. Receptor for interleukin-2. This beta subunit is involved in receptor mediated endocytosis and transduces the mitogenic signals of IL2. Probably in association with IL15RA, involved in the stimulation of neutrophil phagocytosis by IL15. This is Interleukin-2 receptor subunit beta from Homo sapiens (Human).